The primary structure comprises 270 residues: Chymotrypsin-like elastase family member 3A (270 aa).

Positions 1–15 form a signal peptide, or 16; sequence MMLRLLSSLLLVAVA. Residues 16 to 28 constitute a propeptide, activation peptide; that stretch reads SGYGPPSSHSSSR. Positions 29-268 constitute a Peptidase S1 domain; sequence VVHGEDAVPY…FIDWIEETIA (240 aa). An intrachain disulfide couples Cys58 to Cys74. The active-site Charge relay system is His73. Asn114 carries an N-linked (GlcNAc...) asparagine glycan. The cysteines at positions 117 and 120 are disulfide-linked. Asp123 serves as the catalytic Charge relay system. 3 cysteine pairs are disulfide-bonded: Cys157/Cys223, Cys188/Cys204, and Cys213/Cys244. The active-site Charge relay system is the Ser217.

This sequence belongs to the peptidase S1 family. Elastase subfamily.

It catalyses the reaction Preferential cleavage: Ala-|-Xaa. Does not hydrolyze elastin.. Functionally, efficient protease with alanine specificity but only little elastolytic activity. The sequence is that of Chymotrypsin-like elastase family member 3A (CELA3A) from Homo sapiens (Human).